Consider the following 112-residue polypeptide: Putative pterin-4-alpha-carbinolamine dehydratase (112 aa).

This sequence belongs to the pterin-4-alpha-carbinolamine dehydratase family.

It catalyses the reaction (4aS,6R)-4a-hydroxy-L-erythro-5,6,7,8-tetrahydrobiopterin = (6R)-L-erythro-6,7-dihydrobiopterin + H2O. The polypeptide is Putative pterin-4-alpha-carbinolamine dehydratase (Shewanella loihica (strain ATCC BAA-1088 / PV-4)).